The primary structure comprises 938 residues: Isoleucine--tRNA ligase (938 aa).

Residues 58–68 carry the 'HIGH' region motif; it reads PYANGSIHIGH. Glu-561 contacts L-isoleucyl-5'-AMP. Positions 602 to 606 match the 'KMSKS' region motif; the sequence is KMSKS. Position 605 (Lys-605) interacts with ATP. Positions 901, 904, 921, and 924 each coordinate Zn(2+).

The protein belongs to the class-I aminoacyl-tRNA synthetase family. IleS type 1 subfamily. Monomer. Requires Zn(2+) as cofactor.

Its subcellular location is the cytoplasm. It carries out the reaction tRNA(Ile) + L-isoleucine + ATP = L-isoleucyl-tRNA(Ile) + AMP + diphosphate. In terms of biological role, catalyzes the attachment of isoleucine to tRNA(Ile). As IleRS can inadvertently accommodate and process structurally similar amino acids such as valine, to avoid such errors it has two additional distinct tRNA(Ile)-dependent editing activities. One activity is designated as 'pretransfer' editing and involves the hydrolysis of activated Val-AMP. The other activity is designated 'posttransfer' editing and involves deacylation of mischarged Val-tRNA(Ile). The protein is Isoleucine--tRNA ligase of Cronobacter sakazakii (strain ATCC BAA-894) (Enterobacter sakazakii).